The primary structure comprises 949 residues: Zinc finger CCHC domain-containing protein 14 (949 aa).

6 disordered regions span residues 25 to 44 (SSLN…PGGA), 59 to 92 (EAPV…LGKH), 200 to 221 (STSS…LSKV), 236 to 262 (AGIP…LPHC), 355 to 457 (KEKS…DKEK), and 739 to 779 (PESS…PQPA). Positions 28–43 (NGGGGHGGKGAPGPGG) are enriched in gly residues. The span at 61–78 (PVSSVSNSLENALHTSAH) shows a compositional bias: polar residues. Residues 200-219 (STSSPPQQLQSPSPGNPSLS) are compositionally biased toward low complexity. The segment covering 395 to 411 (HAAELRVEVEQPHHQLP) has biased composition (basic and acidic residues). Low complexity predominate over residues 416–425 (SSEYSSSSSS). The segment covering 431–457 (AREESSDSAEENDRRVEIHLESSDKEK) has biased composition (basic and acidic residues). The segment at 906–923 (LSCYNCGATGHRAQDCKQ) adopts a CCHC-type zinc-finger fold.

In Homo sapiens (Human), this protein is Zinc finger CCHC domain-containing protein 14 (ZCCHC14).